A 250-amino-acid chain; its full sequence is Flavin-dependent thymidylate synthase (250 aa).

The ThyX domain maps to 7–233 (LRVQLIAKTD…PAVFADFEVT (227 aa)). FAD-binding positions include Ser71, 95-97 (RHR), and Gln103. DUMP is bound by residues 92 to 95 (ELIR), 103 to 107 (QLSQR), and Arg172. The ThyX motif signature appears at 95 to 105 (RHRHFSYSQLS). FAD-binding positions include 188–190 (NYR) and His194. A dUMP-binding site is contributed by Arg199. Catalysis depends on Arg199, which acts as the Involved in ionization of N3 of dUMP, leading to its activation.

The protein belongs to the thymidylate synthase ThyX family. As to quaternary structure, homotetramer. It depends on FAD as a cofactor.

The catalysed reaction is dUMP + (6R)-5,10-methylene-5,6,7,8-tetrahydrofolate + NADPH + H(+) = dTMP + (6S)-5,6,7,8-tetrahydrofolate + NADP(+). It functions in the pathway pyrimidine metabolism; dTTP biosynthesis. Functionally, catalyzes the reductive methylation of 2'-deoxyuridine-5'-monophosphate (dUMP) to 2'-deoxythymidine-5'-monophosphate (dTMP) while utilizing 5,10-methylenetetrahydrofolate (mTHF) as the methyl donor, and NADPH and FADH(2) as the reductant. The protein is Flavin-dependent thymidylate synthase of Mycobacterium bovis (strain ATCC BAA-935 / AF2122/97).